Consider the following 203-residue polypeptide: Large ribosomal subunit protein bL25 (203 aa).

The protein belongs to the bacterial ribosomal protein bL25 family. CTC subfamily. Part of the 50S ribosomal subunit; part of the 5S rRNA/L5/L18/L25 subcomplex. Contacts the 5S rRNA. Binds to the 5S rRNA independently of L5 and L18.

In terms of biological role, this is one of the proteins that binds to the 5S RNA in the ribosome where it forms part of the central protuberance. The protein is Large ribosomal subunit protein bL25 of Wolbachia pipientis wMel.